Consider the following 72-residue polypeptide: Alpha-conotoxin SII (72 aa).

An N-terminal signal peptide occupies residues 1–21 (MGMRMMFTVFLLVVLATTVVS). A propeptide spanning residues 22 to 50 (FPSDRASDGRDDEAKDERSDMHESDRNGR) is cleaved from the precursor. Residues 23–51 (PSDRASDGRDDEAKDERSDMHESDRNGRG) form a disordered region. The span at 26-49 (RASDGRDDEAKDERSDMHESDRNG) shows a compositional bias: basic and acidic residues. Intrachain disulfides connect Cys52–Cys68, Cys53–Cys58, and Cys54–Cys64. Positions 70–72 (RTL) are excised as a propeptide.

It belongs to the conotoxin A superfamily. Post-translationally, the disulfide bond Cys-52-Cys-68 (Cys I-VI), which corresponds to an extra disulfide bond when compared to the cysteine framework I (CC-C-C), does contribute to conotoxin SII stability and imparts a unique binding mode at the nAChR. Expressed by the venom duct.

It is found in the secreted. In terms of biological role, alpha-conotoxins act on postsynaptic membranes, they bind to the nicotinic acetylcholine receptors (nAChR) and thus inhibit them. This toxin potently inhibits the rodent muscle nAChR (IC(50)=120 nM (adult subtype, alpha-1-beta-1-delta-epsilon/CHRNA1-CHRNB1-CHRND-CHRNE) and IC(50)=370 nM (fetal subtype, alpha-1-beta-1-gamma-delta/CHRNA1-CHRNB1-CHRNG-CHRND)) and weakly inhibits neuronal nAChRs. In contrast to alpha-conotoxins bearing 2 disulfide bonds (framework I), this conotoxin acts via a unique binding mode with the helix and the N- and C-termini buried in the binding pocket of muscle nAChRs. In Conus striatus (Striated cone), this protein is Alpha-conotoxin SII.